The primary structure comprises 367 residues: Pyrimidine monooxygenase RutA (367 aa).

Residues 50–51 (IK), asparagine 116, glutamate 125, 141–142 (RY), and serine 191 contribute to the FMN site.

Belongs to the NtaA/SnaA/DszA monooxygenase family. RutA subfamily.

It catalyses the reaction uracil + FMNH2 + NADH + O2 = (Z)-3-ureidoacrylate + FMN + NAD(+) + H2O + H(+). The enzyme catalyses thymine + FMNH2 + NADH + O2 = (Z)-2-methylureidoacrylate + FMN + NAD(+) + H2O + H(+). Its function is as follows. Catalyzes the pyrimidine ring opening between N-3 and C-4 by an unusual flavin hydroperoxide-catalyzed mechanism, adding oxygen atoms in the process to yield ureidoacrylate peracid, that immediately reacts with FMN forming ureidoacrylate and FMN-N(5)-oxide. The FMN-N(5)-oxide reacts spontaneously with NADH to produce FMN. Requires the flavin reductase RutF to regenerate FMN in vivo. The polypeptide is Pyrimidine monooxygenase RutA (Allorhizobium ampelinum (strain ATCC BAA-846 / DSM 112012 / S4) (Agrobacterium vitis (strain S4))).